Consider the following 325-residue polypeptide: Ribose-phosphate pyrophosphokinase 2 (325 aa).

96–101 serves as a coordination point for ATP; sequence RQDKKD. Mg(2+) contacts are provided by aspartate 135, histidine 137, aspartate 146, and aspartate 150. Histidine 137 serves as a coordination point for ATP. The interval 219–234 is binding of phosphoribosylpyrophosphate; it reads KDRVAILVDDMADTCG.

This sequence belongs to the ribose-phosphate pyrophosphokinase family. Homodimer. The active form is probably a hexamer composed of 3 homodimers. It depends on Mg(2+) as a cofactor.

It carries out the reaction D-ribose 5-phosphate + ATP = 5-phospho-alpha-D-ribose 1-diphosphate + AMP + H(+). It functions in the pathway metabolic intermediate biosynthesis; 5-phospho-alpha-D-ribose 1-diphosphate biosynthesis; 5-phospho-alpha-D-ribose 1-diphosphate from D-ribose 5-phosphate (route I): step 1/1. Its activity is regulated as follows. Activated by magnesium and inorganic phosphate. Competitively or non-competitively inhibited by ADP, 2,3-bisphosphoglyceride or GDP. In terms of biological role, catalyzes the synthesis of phosphoribosylpyrophosphate (PRPP) that is essential for nucleotide synthesis. This is Ribose-phosphate pyrophosphokinase 2 (PRPS2) from Gallus gallus (Chicken).